A 201-amino-acid chain; its full sequence is Ribonuclease HII (201 aa).

The 191-residue stretch at 10-200 (LIEAGCDEAG…LGDGQLELFS (191 aa)) folds into the RNase H type-2 domain. A divalent metal cation-binding residues include aspartate 16, glutamate 17, and aspartate 108.

Belongs to the RNase HII family. Mn(2+) is required as a cofactor. The cofactor is Mg(2+).

It localises to the cytoplasm. It carries out the reaction Endonucleolytic cleavage to 5'-phosphomonoester.. Functionally, endonuclease that specifically degrades the RNA of RNA-DNA hybrids. This is Ribonuclease HII from Bacteroides fragilis (strain ATCC 25285 / DSM 2151 / CCUG 4856 / JCM 11019 / LMG 10263 / NCTC 9343 / Onslow / VPI 2553 / EN-2).